Here is a 1870-residue protein sequence, read N- to C-terminus: Non-reducing polyketide synthase pkgA (1870 aa).

Positions 40-279 (IQDLIRRLHR…SRHSALPISG (240 aa)) are N-terminal acylcarrier protein transacylase domain (SAT). Residues 416-838 (DAKLAVVGMA…GGNTTLLLED (423 aa)) enclose the Ketosynthase family 3 (KS3) domain. Residues 453-492 (PPDRFDLDAHFDPSGEKENTTTKGSQSNRPLSRQAEQTDP) are disordered. Residues 455 to 472 (DRFDLDAHFDPSGEKENT) show a composition bias toward basic and acidic residues. Over residues 473–492 (TTKGSQSNRPLSRQAEQTDP) the composition is skewed to polar residues. Catalysis depends on for beta-ketoacyl synthase activity residues cysteine 577, histidine 712, and histidine 755. The tract at residues 947 to 1282 (AFSGQGCLYH…QSFASLRRGD (336 aa)) is malonyl-CoA:ACP transacylase (MAT) domain. The segment at 1004–1027 (RCPHRESTPSSDASHDSNTNRTST) is disordered. Residues 1011–1027 (TPSSDASHDSNTNRTST) are compositionally biased toward polar residues. Positions 1364-1704 (TSSVQQIIFE…PRALMPVLFP (341 aa)) are product template (PT) domain. Residues 1368–1502 (QQIIFEEYDE…ATVCYEEAQD (135 aa)) form an N-terminal hotdog fold region. Positions 1368–1700 (QQIIFEEYDE…FKAVPRALMP (333 aa)) constitute a PKS/mFAS DH domain. Residue histidine 1400 is the Proton acceptor; for dehydratase activity of the active site. Residues 1538–1700 (KGGPRVNNFF…FKAVPRALMP (163 aa)) are C-terminal hotdog fold. The active-site Proton donor; for dehydratase activity is aspartate 1602. A Carrier domain is found at 1795 to 1870 (QSQNAQATAC…VQDLVTWLSK (76 aa)). Serine 1832 is modified (O-(pantetheine 4'-phosphoryl)serine).

Pantetheine 4'-phosphate is required as a cofactor.

It catalyses the reaction holo-[ACP] + 6 malonyl-CoA + acetyl-CoA + 6 H(+) = 3,5,7,9,11,13-hexaoxotetradecanoyl-[ACP] + 6 CO2 + 7 CoA. The catalysed reaction is holo-[ACP] + 5 malonyl-CoA + acetyl-CoA + 5 H(+) = 3,5,7,9,11-pentaoxododecanoyl-[ACP] + 5 CO2 + 6 CoA. It participates in secondary metabolite biosynthesis. Its function is as follows. Non-reducing polyketide synthase; part of the pkg gene cluster that mediates the biosynthesis of dihydrocitreoisocoumarin and 6,8-dihydroxy-3-(2-oxopropyl)-isocoumarin. The non-reducing polyketide synthase pkgA performs the condensation of one acetyl-CoA starter unit with 6 and 5 malonyl-CoA units, respectively. As pkgA lacks a releasing domain, the thioesterase pkgB is necessary to break the thioester bond and release dihydrocitreoisocoumarin and 6,8-dihydroxy-3-(2-oxopropyl)-isocoumarin from pkgA. The polypeptide is Non-reducing polyketide synthase pkgA (Emericella nidulans (strain FGSC A4 / ATCC 38163 / CBS 112.46 / NRRL 194 / M139) (Aspergillus nidulans)).